The chain runs to 549 residues: Chaperonin GroEL (549 aa).

ATP-binding positions include 29-32 (TLGP), Lys50, 86-90 (DGTTT), Gly414, 477-479 (NAA), and Asp493.

It belongs to the chaperonin (HSP60) family. As to quaternary structure, forms a cylinder of 14 subunits composed of two heptameric rings stacked back-to-back. Interacts with the co-chaperonin GroES.

It localises to the cytoplasm. It catalyses the reaction ATP + H2O + a folded polypeptide = ADP + phosphate + an unfolded polypeptide.. Functionally, together with its co-chaperonin GroES, plays an essential role in assisting protein folding. The GroEL-GroES system forms a nano-cage that allows encapsulation of the non-native substrate proteins and provides a physical environment optimized to promote and accelerate protein folding. The polypeptide is Chaperonin GroEL (Geotalea uraniireducens (strain Rf4) (Geobacter uraniireducens)).